The primary structure comprises 297 residues: 4-hydroxy-tetrahydrodipicolinate synthase (297 aa).

Threonine 49 lines the pyruvate pocket. Tyrosine 137 acts as the Proton donor/acceptor in catalysis. Residue lysine 166 is the Schiff-base intermediate with substrate of the active site. Isoleucine 208 is a binding site for pyruvate.

It belongs to the DapA family. Homotetramer; dimer of dimers.

The protein localises to the cytoplasm. It catalyses the reaction L-aspartate 4-semialdehyde + pyruvate = (2S,4S)-4-hydroxy-2,3,4,5-tetrahydrodipicolinate + H2O + H(+). It functions in the pathway amino-acid biosynthesis; L-lysine biosynthesis via DAP pathway; (S)-tetrahydrodipicolinate from L-aspartate: step 3/4. Functionally, catalyzes the condensation of (S)-aspartate-beta-semialdehyde [(S)-ASA] and pyruvate to 4-hydroxy-tetrahydrodipicolinate (HTPA). This chain is 4-hydroxy-tetrahydrodipicolinate synthase, found in Porphyromonas gingivalis (strain ATCC 33277 / DSM 20709 / CIP 103683 / JCM 12257 / NCTC 11834 / 2561).